A 159-amino-acid chain; its full sequence is Eukaryotic translation initiation factor 5A (159 aa).

At Lys55 the chain carries Hypusine.

The protein belongs to the eIF-5A family. Post-translationally, lys-55 undergoes hypusination, a unique post-translational modification that consists in the addition of a butylamino group from spermidine to lysine side chain, leading to the formation of the unusual amino acid hypusine. eIF-5As are the only known proteins to undergo this modification, which is essential for their function.

It localises to the cytoplasm. Translation factor that promotes translation elongation and termination, particularly upon ribosome stalling at specific amino acid sequence contexts. Binds between the exit (E) and peptidyl (P) site of the ribosome and promotes rescue of stalled ribosome: specifically required for efficient translation of polyproline-containing peptides as well as other motifs that stall the ribosome. Acts as a ribosome quality control (RQC) cofactor by joining the RQC complex to facilitate peptidyl transfer during CAT tailing step. The protein is Eukaryotic translation initiation factor 5A (eif5a) of Dictyostelium discoideum (Social amoeba).